The following is a 298-amino-acid chain: Pyridoxal 5'-phosphate synthase subunit PdxS (298 aa).

Asp24 lines the D-ribose 5-phosphate pocket. Catalysis depends on Lys81, which acts as the Schiff-base intermediate with D-ribose 5-phosphate. Residue Gly153 coordinates D-ribose 5-phosphate. Arg165 contributes to the D-glyceraldehyde 3-phosphate binding site. Residues Gly214 and 235 to 236 (GS) each bind D-ribose 5-phosphate.

The protein belongs to the PdxS/SNZ family. In terms of assembly, in the presence of PdxT, forms a dodecamer of heterodimers.

It catalyses the reaction aldehydo-D-ribose 5-phosphate + D-glyceraldehyde 3-phosphate + L-glutamine = pyridoxal 5'-phosphate + L-glutamate + phosphate + 3 H2O + H(+). Its pathway is cofactor biosynthesis; pyridoxal 5'-phosphate biosynthesis. Catalyzes the formation of pyridoxal 5'-phosphate from ribose 5-phosphate (RBP), glyceraldehyde 3-phosphate (G3P) and ammonia. The ammonia is provided by the PdxT subunit. Can also use ribulose 5-phosphate and dihydroxyacetone phosphate as substrates, resulting from enzyme-catalyzed isomerization of RBP and G3P, respectively. In Halalkalibacterium halodurans (strain ATCC BAA-125 / DSM 18197 / FERM 7344 / JCM 9153 / C-125) (Bacillus halodurans), this protein is Pyridoxal 5'-phosphate synthase subunit PdxS.